A 786-amino-acid chain; its full sequence is Keratin, type I cytoskeletal 9 (786 aa).

The tract at residues 1–21 (MNCRQFLSSHCSRDSSGGGGG) is disordered. A head region spans residues 1–136 (MNCRQFLSSH…SGAGGILGAD (136 aa)). Ser52 carries the post-translational modification Phosphoserine. Residues 137-172 (EKTTMQDLNSRLASYLDKVQALEDANKELESKIREW) are coil 1A. One can recognise an IF rod domain in the interval 137-449 (EKTTMQDLNS…SLLEGGQEDF (313 aa)). A linker 1 region spans residues 173-191 (YDKQGSRTFHRDYSPYYDT). A coil 1B region spans residues 192–283 (IEDLKNQIVN…KNHEDEMSQL (92 aa)). A linker 12 region spans residues 284–306 (TGQNSGDVNVEMNAAPGRDLTKI). Positions 307–445 (LNDMREEYER…KTYRSLLEGG (139 aa)) are coil 2. The tract at residues 446–760 (QEDFESHESG…GGGSGSKGGS (315 aa)) is tail. The interval 447-786 (EDFESHESGQ…DDTQGYHIQY (340 aa)) is disordered. Composition is skewed to gly residues over residues 460–657 (GSGG…GGSG) and 664–761 (SSSG…GGSG). Low complexity predominate over residues 762–773 (RSSQVQSSSSKS).

Belongs to the intermediate filament family. As to quaternary structure, heterotetramer of two type I and two type II keratins.

Its function is as follows. May serve an important special function either in the mature palmar and plantar skin tissue or in the morphogenetic program of the formation of these tissues. Plays a role in keratin filament assembly. In Canis lupus familiaris (Dog), this protein is Keratin, type I cytoskeletal 9.